Reading from the N-terminus, the 111-residue chain is MARGRGRHERRGEMPLPSEDEGTMLCIVQRVVGAGFLEVLCTDGEVYMARIPGKMRRRVWMREGDVVLFLPWGTADKKGEVVYRYLRDEVRKLIDMNLLPEELVEEVAGAE.

An S1-like domain is found at G12–L86.

This sequence belongs to the eIF-1A family.

Seems to be required for maximal rate of protein biosynthesis. Enhances ribosome dissociation into subunits and stabilizes the binding of the initiator Met-tRNA(I) to 40 S ribosomal subunits. The chain is Translation initiation factor 1A (eIF1A) from Aeropyrum pernix (strain ATCC 700893 / DSM 11879 / JCM 9820 / NBRC 100138 / K1).